The sequence spans 1197 residues: DNA-directed RNA polymerase subunit beta (1197 aa).

Belongs to the RNA polymerase beta chain family. In terms of assembly, the RNAP catalytic core consists of 2 alpha, 1 beta, 1 beta' and 1 omega subunit. When a sigma factor is associated with the core the holoenzyme is formed, which can initiate transcription.

The enzyme catalyses RNA(n) + a ribonucleoside 5'-triphosphate = RNA(n+1) + diphosphate. Functionally, DNA-dependent RNA polymerase catalyzes the transcription of DNA into RNA using the four ribonucleoside triphosphates as substrates. The protein is DNA-directed RNA polymerase subunit beta of Streptococcus pyogenes serotype M12 (strain MGAS9429).